Here is a 310-residue protein sequence, read N- to C-terminus: Malate dehydrogenase (310 aa).

NAD(+)-binding positions include 7-12 (GAGNVG) and aspartate 32. Substrate is bound by residues arginine 81 and arginine 87. NAD(+) contacts are provided by residues asparagine 94 and 117–119 (VSN). Residues asparagine 119 and arginine 150 each coordinate substrate. Histidine 174 functions as the Proton acceptor in the catalytic mechanism.

Belongs to the LDH/MDH superfamily. MDH type 3 family. As to quaternary structure, homotetramer; arranged as a dimer of dimers.

The enzyme catalyses (S)-malate + NAD(+) = oxaloacetate + NADH + H(+). Functionally, catalyzes the reversible oxidation of malate to oxaloacetate. In Chlorobaculum tepidum (strain ATCC 49652 / DSM 12025 / NBRC 103806 / TLS) (Chlorobium tepidum), this protein is Malate dehydrogenase.